A 275-amino-acid polypeptide reads, in one-letter code: 4-hydroxy-3-methylbut-2-enyl diphosphate reductase (275 aa).

Residue cysteine 12 coordinates [4Fe-4S] cluster. (2E)-4-hydroxy-3-methylbut-2-enyl diphosphate contacts are provided by histidine 36 and histidine 70. Positions 36 and 70 each coordinate dimethylallyl diphosphate. The isopentenyl diphosphate site is built by histidine 36 and histidine 70. Cysteine 92 serves as a coordination point for [4Fe-4S] cluster. Position 120 (histidine 120) interacts with (2E)-4-hydroxy-3-methylbut-2-enyl diphosphate. Residue histidine 120 participates in dimethylallyl diphosphate binding. Histidine 120 provides a ligand contact to isopentenyl diphosphate. The Proton donor role is filled by glutamate 122. Residue threonine 158 coordinates (2E)-4-hydroxy-3-methylbut-2-enyl diphosphate. [4Fe-4S] cluster is bound at residue cysteine 186. Positions 214, 215, 216, and 258 each coordinate (2E)-4-hydroxy-3-methylbut-2-enyl diphosphate. Dimethylallyl diphosphate-binding residues include serine 214, serine 215, asparagine 216, and serine 258. Residues serine 214, serine 215, asparagine 216, and serine 258 each contribute to the isopentenyl diphosphate site.

Belongs to the IspH family. It depends on [4Fe-4S] cluster as a cofactor.

It carries out the reaction isopentenyl diphosphate + 2 oxidized [2Fe-2S]-[ferredoxin] + H2O = (2E)-4-hydroxy-3-methylbut-2-enyl diphosphate + 2 reduced [2Fe-2S]-[ferredoxin] + 2 H(+). The enzyme catalyses dimethylallyl diphosphate + 2 oxidized [2Fe-2S]-[ferredoxin] + H2O = (2E)-4-hydroxy-3-methylbut-2-enyl diphosphate + 2 reduced [2Fe-2S]-[ferredoxin] + 2 H(+). It functions in the pathway isoprenoid biosynthesis; dimethylallyl diphosphate biosynthesis; dimethylallyl diphosphate from (2E)-4-hydroxy-3-methylbutenyl diphosphate: step 1/1. It participates in isoprenoid biosynthesis; isopentenyl diphosphate biosynthesis via DXP pathway; isopentenyl diphosphate from 1-deoxy-D-xylulose 5-phosphate: step 6/6. In terms of biological role, catalyzes the conversion of 1-hydroxy-2-methyl-2-(E)-butenyl 4-diphosphate (HMBPP) into a mixture of isopentenyl diphosphate (IPP) and dimethylallyl diphosphate (DMAPP). Acts in the terminal step of the DOXP/MEP pathway for isoprenoid precursor biosynthesis. This Sulfurimonas denitrificans (strain ATCC 33889 / DSM 1251) (Thiomicrospira denitrificans (strain ATCC 33889 / DSM 1251)) protein is 4-hydroxy-3-methylbut-2-enyl diphosphate reductase.